Consider the following 665-residue polypeptide: ATPase WRNIP1 (665 aa).

A UBZ4-type zinc finger spans residues 17–44 (QVQCPVCQQMMPAAHINSHLDRCLLLHP). Residues Cys-20, Cys-23, His-31, His-35, and Cys-39 each coordinate Zn(2+). The segment at 48 to 190 (AEPAAGSHRA…DGEDDPGHWD (143 aa)) is disordered. Phosphoserine occurs at positions 65 and 75. Polar residues predominate over residues 76–89 (ESSALKQPATPTAA). Lys-81 is covalently cross-linked (Glycyl lysine isopeptide (Lys-Gly) (interchain with G-Cter in ubiquitin)). Residue Thr-85 is modified to Phosphothreonine. Residues Ser-91 and Ser-92 each carry the phosphoserine modification. Over residues 92–104 (SEGEGEEGDDGGE) the composition is skewed to acidic residues. Thr-116 carries the phosphothreonine modification. Residues 130–155 (RSSSPGRKGSGKRPAAAAAAGSASPR) show a composition bias toward low complexity. Phosphoserine is present on Ser-139. Lys-141 participates in a covalent cross-link: Glycyl lysine isopeptide (Lys-Gly) (interchain with G-Cter in ubiquitin). The residue at position 153 (Ser-153) is a Phosphoserine. Over residues 159–184 (EAEAQEEEEAVGDGDGDGDADADGED) the composition is skewed to acidic residues. Lys-225 participates in a covalent cross-link: Glycyl lysine isopeptide (Lys-Gly) (interchain with G-Cter in ubiquitin). 270–276 (PGCGKTT) lines the ATP pocket. Residues Lys-301, Lys-310, Lys-316, Lys-322, and Lys-335 each participate in a glycyl lysine isopeptide (Lys-Gly) (interchain with G-Cter in ubiquitin) cross-link. A Glycyl lysine isopeptide (Lys-Gly) (interchain with G-Cter in SUMO2); alternate cross-link involves residue Lys-482. Lys-482 participates in a covalent cross-link: Glycyl lysine isopeptide (Lys-Gly) (interchain with G-Cter in ubiquitin); alternate. 2 positions are modified to phosphotyrosine: Tyr-534 and Tyr-562. A Glycyl lysine isopeptide (Lys-Gly) (interchain with G-Cter in ubiquitin) cross-link involves residue Lys-627. Residue Lys-633 forms a Glycyl lysine isopeptide (Lys-Gly) (interchain with G-Cter in ubiquitin); alternate linkage. An N6-acetyllysine; alternate modification is found at Lys-633. Lys-636 is covalently cross-linked (Glycyl lysine isopeptide (Lys-Gly) (interchain with G-Cter in ubiquitin)).

It belongs to the AAA ATPase family. RarA/MGS1/WRNIP1 subfamily. Forms homooligomers, possibly octamers. Directly interacts with POLD1, POLD2 and POLD4. Interacts with the N-terminal domain of WRN. Interacts (via UBZ4-type zinc finger) with monoubiquitin and polyubiquitin. Interacts with TRIM14 and PPP6C; these interactions positively regulate the RIGI signaling pathway. In terms of processing, sumoylated with SUMO1 and SUMO2/3. As to expression, ubiquitously expressed.

The protein resides in the nucleus. It localises to the cytoplasm. It carries out the reaction ATP + H2O = ADP + phosphate + H(+). Functions as a modulator of initiation or reinitiation events during DNA polymerase delta-mediated DNA synthesis. In the presence of ATP, stimulation of DNA polymerase delta-mediated DNA synthesis is decreased. Also plays a role in the innate immune defense against viruses. Stabilizes the RIGI dsRNA interaction and promotes RIGI 'Lys-63'-linked polyubiquitination. In turn, RIGI transmits the signal through mitochondrial MAVS. The chain is ATPase WRNIP1 from Homo sapiens (Human).